The sequence spans 194 residues: 23 kDa U4/U6.U5 small nuclear ribonucleoprotein component (194 aa).

Residues 80–104 form a C2H2-type zinc finger; the sequence is FYCDICNLTFKDTLQYIDHLNHKVH.

As to quaternary structure, component of the U4/U6-U5 tri-snRNP complex composed of the U4, U6 and U5 snRNAs and at least PRP3, PRP4, PRP6, PRP8, PRP18, PRP31, PRP38, SNU13, SNU23, SNU66, SNU114, SPP381, SMB1, SMD1, SMD2, SMD3, SMX2, SMX3, LSM2, LSM3, LSM4, LSM5, LSM6, LSM7, LSM8, BRR2 and DIB1.

It is found in the nucleus. Participates in pre-mRNA splicing. Part of the U4/U5/U6 tri-snRNP complex, one of the building blocks of the spliceosome. This is 23 kDa U4/U6.U5 small nuclear ribonucleoprotein component (SNU23) from Saccharomyces cerevisiae (strain ATCC 204508 / S288c) (Baker's yeast).